A 77-amino-acid polypeptide reads, in one-letter code: Acyl carrier protein (77 aa).

In terms of domain architecture, Carrier spans Ser2–Thr77. Ser37 carries the post-translational modification O-(pantetheine 4'-phosphoryl)serine.

This sequence belongs to the acyl carrier protein (ACP) family. In terms of processing, 4'-phosphopantetheine is transferred from CoA to a specific serine of apo-ACP by AcpS. This modification is essential for activity because fatty acids are bound in thioester linkage to the sulfhydryl of the prosthetic group.

It localises to the cytoplasm. It participates in lipid metabolism; fatty acid biosynthesis. In terms of biological role, carrier of the growing fatty acid chain in fatty acid biosynthesis. This Trichlorobacter lovleyi (strain ATCC BAA-1151 / DSM 17278 / SZ) (Geobacter lovleyi) protein is Acyl carrier protein.